The sequence spans 186 residues: Small ribosomal subunit protein uS7 (186 aa).

This sequence belongs to the universal ribosomal protein uS7 family. As to quaternary structure, part of the 30S ribosomal subunit.

Functionally, one of the primary rRNA binding proteins, it binds directly to 16S rRNA where it nucleates assembly of the head domain of the 30S subunit. Is located at the subunit interface close to the decoding center. This Methanothermobacter thermautotrophicus (strain ATCC 29096 / DSM 1053 / JCM 10044 / NBRC 100330 / Delta H) (Methanobacterium thermoautotrophicum) protein is Small ribosomal subunit protein uS7.